The sequence spans 198 residues: Protein UNCMA_24250 (198 aa).

The AMMECR1 domain occupies 5 to 194 (EDGTLAVKTA…ETEPGGPVIE (190 aa)).

The protein is Protein UNCMA_24250 of Methanocella arvoryzae (strain DSM 22066 / NBRC 105507 / MRE50).